Reading from the N-terminus, the 421-residue chain is Histidine--tRNA ligase (421 aa).

This sequence belongs to the class-II aminoacyl-tRNA synthetase family. In terms of assembly, homodimer.

The protein localises to the cytoplasm. The enzyme catalyses tRNA(His) + L-histidine + ATP = L-histidyl-tRNA(His) + AMP + diphosphate + H(+). This Nitrosomonas eutropha (strain DSM 101675 / C91 / Nm57) protein is Histidine--tRNA ligase.